The following is a 368-amino-acid chain: MSSRGGKKKSTKTSRSAKAGVIFPVGRMLRYIKKGHPKYRIGVGAPVYMAAVLEYLTAEILELAGNAARDNKKGRVTPRHILLAVANDEELNQLLKGVTIASGGVLPNIHPELLAKKRGSKGKLEAIITPPPAKKAKSPSQKKPVAKKTGGKKGARKSKKQGEVSKAASADSTTEGAPTDGFTVLSTKSLFLGQKLQVVQADIASIDSDAVVHPTNADFYIGGEVGSTLEKKGGKEFVEAVLELRKKNGPLEVAGAAVSAGHGLPAKFVIHCNSPVWGADKCEELLEKTVKNCLALADDRKLKSIAFPSIGSGRNGFPKQTAAQLILKAISSYFVSTMSSSIKTVYFVLFDSESIGIYVQEMAKLDAN.

In terms of domain architecture, Histone H2A spans 2 to 117; it reads SSRGGKKKST…NIHPELLAKK (116 aa). An N6-lactoyllysine; alternate mark is found at lysine 7 and lysine 9. Lysine 18 is subject to N6-methyllysine. An N6-acetyllysine; alternate modification is found at lysine 116. Lysine 116 is covalently cross-linked (Glycyl lysine isopeptide (Lys-Gly) (interchain with G-Cter in ubiquitin); alternate). A Glycyl lysine isopeptide (Lys-Gly) (interchain with G-Cter in ubiquitin) cross-link involves residue lysine 117. Lysine 123 is subject to N6-acetyllysine; alternate. Lysine 123 is subject to N6,N6-dimethyllysine; alternate. A Glycyl lysine isopeptide (Lys-Gly) (interchain with G-Cter in SUMO2); alternate cross-link involves residue lysine 123. The interval 128–179 is disordered; the sequence is ITPPPAKKAKSPSQKKPVAKKTGGKKGARKSKKQGEVSKAASADSTTEGAPT. Position 129 is a phosphothreonine (threonine 129). A compositionally biased stretch (basic residues) spans 144–159; the sequence is PVAKKTGGKKGARKSK. Lysine 166 is covalently cross-linked (Glycyl lysine isopeptide (Lys-Gly) (interchain with G-Cter in SUMO2)). Residues serine 169 and serine 172 each carry the phosphoserine modification. One can recognise a Macro domain in the interval 183 to 366; the sequence is TVLSTKSLFL…IYVQEMAKLD (184 aa). Lysine 188 is covalently cross-linked (Glycyl lysine isopeptide (Lys-Gly) (interchain with G-Cter in SUMO2)). A glycoprotein is bound by residues aspartate 202, isoleucine 203, valine 225, serine 274, glycine 311, serine 312, glycine 313, and asparagine 315. Residue lysine 319 forms a Glycyl lysine isopeptide (Lys-Gly) (interchain with G-Cter in SUMO2) linkage.

Belongs to the histone H2A family. The nucleosome is a histone octamer containing two molecules each of H2A, H2B, H3 and H4 assembled in one H3-H4 heterotetramer and two H2A-H2B heterodimers. Interacts with HDAC1 and HDAC2. Interacts with SPOP. Part of a complex consisting of MACROH2A1, CUL3 and SPOP. As to quaternary structure, interacts with PARP1. Monoubiquitinated at either Lys-116 or Lys-117. May also be polyubiquitinated. Ubiquitination is mediated by the CUL3/SPOP E3 complex and does not promote proteasomal degradation. Instead, it is required for enrichment in inactive X chromosome chromatin. In terms of tissue distribution, present only in liver and brain (at protein level). As to expression, present in brain, thymus, testis, liver and kidney (at protein level).

The protein localises to the nucleus. The protein resides in the chromosome. Its function is as follows. Variant histone H2A which replaces conventional H2A in a subset of nucleosomes where it represses transcription. Nucleosomes wrap and compact DNA into chromatin, limiting DNA accessibility to the cellular machineries which require DNA as a template. Histones thereby play a central role in transcription regulation, DNA repair, DNA replication and chromosomal stability. DNA accessibility is regulated via a complex set of post-translational modifications of histones, also called histone code, and nucleosome remodeling. Involved in stable X chromosome inactivation. Inhibits the binding of transcription factors, including NF-kappa-B, and interferes with the activity of remodeling SWI/SNF complexes. Inhibits histone acetylation by EP300 and recruits class I HDACs, which induces a hypoacetylated state of chromatin. Isoform that specifically binds poly-ADP-ribose and O-acetyl-ADP-ribose and plays a key role in NAD(+) metabolism. Able to bind to the ends of poly-ADP-ribose chains created by PARP1 and cap them. This prevents PARP1 from further addition of ADP-ribose and thus limits the consumption of nuclear NAD(+), allowing the cell to maintain proper NAD(+) levels in both the nucleus and the mitochondria to promote proper mitochondrial respiration. Increases the expression of genes involved in redox metabolism, including SOD3. In terms of biological role, in contrast to isoform 1, does not bind poly-ADP-ribose. Represses SOD3 gene expression. In Rattus norvegicus (Rat), this protein is Core histone macro-H2A.1.